A 346-amino-acid chain; its full sequence is Phosphoribosylformylglycinamidine cyclo-ligase (346 aa).

It belongs to the AIR synthase family.

It is found in the cytoplasm. It catalyses the reaction 2-formamido-N(1)-(5-O-phospho-beta-D-ribosyl)acetamidine + ATP = 5-amino-1-(5-phospho-beta-D-ribosyl)imidazole + ADP + phosphate + H(+). Its pathway is purine metabolism; IMP biosynthesis via de novo pathway; 5-amino-1-(5-phospho-D-ribosyl)imidazole from N(2)-formyl-N(1)-(5-phospho-D-ribosyl)glycinamide: step 2/2. This Vibrio parahaemolyticus serotype O3:K6 (strain RIMD 2210633) protein is Phosphoribosylformylglycinamidine cyclo-ligase.